Here is a 376-residue protein sequence, read N- to C-terminus: WD repeat-containing protein 86 (376 aa).

8 WD repeats span residues 13-52 (DHRGGINWLSLSPDGQRLLTGSEDGTARLWSTADGQCCAL), 55-94 (GHESYVTFCQLEDEAAFTCSADCTIRRWDVLTGQCLQVYR), 95-132 (GHTSIVNRILVANNQLFSSSYDRTARVWSVDKGQMSRE), 135-188 (GHRN…CHQT), 191-232 (GHTG…RVFR), 234-272 (HRGSVICLELVNRLVYSGSADRTVKCWLADTGECVRTFT), 274-310 (HRRNVSALKYHAGTLFTGSGDACARAFDAQSGELRRV), and 313-350 (GHTFIINCIQVHGQVLYTASHDGALRLWDVRGLRGAPR).

This chain is WD repeat-containing protein 86 (WDR86), found in Homo sapiens (Human).